Consider the following 346-residue polypeptide: MPPKIAEVIQHDVCAACGACEAVCPIGAVTVKKAAEIRDPNDLSLYEKGAAFQVCEGCLTCSRICPVVDGFIENELLNVRKFFGAKSKDNAGSQDGGVTSGILKALFNKGEIDCAVGITRNENWEPEVVLLTSAEDVERTRGTKYTSDPVVAALREAFEKYDRIAVVGVPCQAHAARLIRENVNEKIVLIIGLLCMESFHHDVMLDKIIPEIMKVNVRDIVKMEFTKGKFWVYTKDGEVHSVPIKDIAKYARNPCHHCCDYTSVFADISVGSVGAPDGWNSVFIRTEIGEKYFDMVRDEMEIMEDPKPGLELVGKLIEMKRKGNAEHFQEVCKEFSFETGIRSETV.

2 4Fe-4S ferredoxin-type domains span residues 5-34 (IAEV…VKKA) and 46-76 (YEKG…ENEL). Positions 14, 17, 20, 24, 55, 58, 61, and 65 each coordinate [4Fe-4S] cluster.

The FPO complex is composed of at least 13 different subunits. The cofactor is [4Fe-4S] cluster. FAD is required as a cofactor.

Its subcellular location is the membrane. The protein resides in the cytoplasm. It catalyses the reaction methanophenazine + reduced coenzyme F420-(gamma-L-Glu)(n) = dihydromethanophenazine + oxidized coenzyme F420-(gamma-L-Glu)(n) + H(+). The catalysed reaction is reduced coenzyme F420-(gamma-L-Glu)(n) + 2 oxidized [2Fe-2S]-[ferredoxin] = oxidized coenzyme F420-(gamma-L-Glu)(n) + 2 reduced [2Fe-2S]-[ferredoxin] + 3 H(+). In terms of biological role, component of the F(420)H(2) dehydrogenase (FPO complex) which is part of the energy-conserving F(420)H(2):heterodisulfide oxidoreductase system. The membrane-bound electron transfer system of the complex plays an important role in the metabolism of methylotrophic methanogens when the organisms grow on methanol or methylamines. Catalyzes the oxidation of methanophenazine to dihydromethanophenazine. It shuttles electrons from F(420)H(2), via FAD and iron-sulfur (Fe-S) centers, to methanophenazine (an electron carrier in the membrane). It couples the redox reaction to proton translocation (for every two electrons transferred, two hydrogen ions are translocated across the cytoplasmic membrane), and thus conserves the redox energy in a proton gradient. It also catalyzes the oxidation of F(420)H(2) with quinones such as 2,3-dimethyl-1,4-naphthoquinone, 2-methyl-1,4-naphthoquinone and tetramethyl-p-benzoquinone. Might have a dual function, acting as an electron input module when connected to the membrane integral Fpo complex, or as a soluble single subunit, being involved in the reoxydation of reduced ferredoxin in the cytoplasm. This Methanosarcina mazei (strain ATCC BAA-159 / DSM 3647 / Goe1 / Go1 / JCM 11833 / OCM 88) (Methanosarcina frisia) protein is F(420)H(2) dehydrogenase subunit F (fpoF).